We begin with the raw amino-acid sequence, 449 residues long: 23S rRNA (uracil(1939)-C(5))-methyltransferase RlmD (449 aa).

The region spanning 15-73 (KAIPAKNLTVTVTSLDPFGQGVARHEGKTVFVTGVLPGEQAEVQLTEDKRQFSHAKLKR) is the TRAM domain. [4Fe-4S] cluster is bound by residues cysteine 86, cysteine 92, cysteine 95, and cysteine 173. S-adenosyl-L-methionine-binding residues include glutamine 276, phenylalanine 305, asparagine 310, glutamate 326, asparagine 353, and aspartate 374. The active-site Nucleophile is the cysteine 400.

Belongs to the class I-like SAM-binding methyltransferase superfamily. RNA M5U methyltransferase family. RlmD subfamily.

The catalysed reaction is uridine(1939) in 23S rRNA + S-adenosyl-L-methionine = 5-methyluridine(1939) in 23S rRNA + S-adenosyl-L-homocysteine + H(+). Functionally, catalyzes the formation of 5-methyl-uridine at position 1939 (m5U1939) in 23S rRNA. The polypeptide is 23S rRNA (uracil(1939)-C(5))-methyltransferase RlmD (Pectobacterium carotovorum subsp. carotovorum (strain PC1)).